A 118-amino-acid polypeptide reads, in one-letter code: Beta-2-microglobulin (118 aa).

The signal sequence occupies residues 1–20; it reads MAVSAALVLLGLLSLSGLDA. Positions 25–112 constitute an Ig-like C1-type domain; the sequence is PEVQVYSRHP…HVTLTQPKIV (88 aa). The cysteines at positions 45 and 99 are disulfide-linked.

The protein belongs to the beta-2-microglobulin family. Heterodimer of an alpha chain and a beta chain. Beta-2-microglobulin is the beta-chain of major histocompatibility complex class I molecules.

Its subcellular location is the secreted. In terms of biological role, component of the class I major histocompatibility complex (MHC). Involved in the presentation of peptide antigens to the immune system. The polypeptide is Beta-2-microglobulin (B2M) (Ovis aries (Sheep)).